Here is a 37-residue protein sequence, read N- to C-terminus: Antifungal protein S (37 aa).

This sequence belongs to the thaumatin family.

Its function is as follows. Has antifungal activity. Inhibits the growth of Trichoderma viridae and Candida albicans. This is Antifungal protein S from Hordeum vulgare (Barley).